The chain runs to 427 residues: Four-jointed box protein 1 (427 aa).

A signal peptide spans 1 to 18; the sequence is MRALSANLFAVLLMCALA. N-linked (GlcNAc...) asparagine glycosylation is found at asparagine 81, asparagine 244, and asparagine 270.

It localises to the secreted. May act as an inhibitor of dendrite extension and branching. In Xiphophorus maculatus (Southern platyfish), this protein is Four-jointed box protein 1 (fjx1).